Reading from the N-terminus, the 471-residue chain is Adenosylhomocysteinase (471 aa).

Residues T58, D133, and E195 each contribute to the substrate site. 196-198 is an NAD(+) binding site; that stretch reads TTT. 2 residues coordinate substrate: K225 and D229. Residues N230, 259–264, E282, N317, 338–340, and N383 contribute to the NAD(+) site; these read GFGDVG and IGH.

This sequence belongs to the adenosylhomocysteinase family. The cofactor is NAD(+).

Its subcellular location is the cytoplasm. It carries out the reaction S-adenosyl-L-homocysteine + H2O = L-homocysteine + adenosine. The protein operates within amino-acid biosynthesis; L-homocysteine biosynthesis; L-homocysteine from S-adenosyl-L-homocysteine: step 1/1. In terms of biological role, may play a key role in the regulation of the intracellular concentration of adenosylhomocysteine. This chain is Adenosylhomocysteinase, found in Rhodopseudomonas palustris (strain BisB5).